An 82-amino-acid polypeptide reads, in one-letter code: ATP synthase subunit c (82 aa).

The next 2 helical transmembrane spans lie at 3 to 23 and 57 to 77; these read PLIASASVLAAALAIGLASLG and LAFMESLTIYGLVIALVLLFA.

F-type ATPases have 2 components, F(1) - the catalytic core - and F(0) - the membrane proton channel. F(1) has five subunits: alpha(3), beta(3), gamma(1), delta(1), epsilon(1). F(0) has four main subunits: a(1), b(1), b'(1) and c(10-14). The alpha and beta chains form an alternating ring which encloses part of the gamma chain. F(1) is attached to F(0) by a central stalk formed by the gamma and epsilon chains, while a peripheral stalk is formed by the delta, b and b' chains.

The protein localises to the cellular thylakoid membrane. With respect to regulation, inhibited by dicyclohexylcarbodiimide. In terms of biological role, f(1)F(0) ATP synthase produces ATP from ADP in the presence of a proton or sodium gradient. F-type ATPases consist of two structural domains, F(1) containing the extramembraneous catalytic core and F(0) containing the membrane proton channel, linked together by a central stalk and a peripheral stalk. During catalysis, ATP synthesis in the catalytic domain of F(1) is coupled via a rotary mechanism of the central stalk subunits to proton translocation. Its function is as follows. Key component of the F(0) channel; it plays a direct role in translocation across the membrane. A homomeric c-ring of between 10-14 subunits forms the central stalk rotor element with the F(1) delta and epsilon subunits. The complex from the organism is particularly stable to disruption and remains functional after 6 hrs at 55 degrees Celsius. The polypeptide is ATP synthase subunit c (atpE) (Thermosynechococcus vestitus (strain NIES-2133 / IAM M-273 / BP-1)).